The primary structure comprises 184 residues: Large ribosomal subunit protein uL6 (184 aa).

Belongs to the universal ribosomal protein uL6 family. In terms of assembly, part of the 50S ribosomal subunit.

Its function is as follows. This protein binds to the 23S rRNA, and is important in its secondary structure. It is located near the subunit interface in the base of the L7/L12 stalk, and near the tRNA binding site of the peptidyltransferase center. This chain is Large ribosomal subunit protein uL6, found in Thermotoga petrophila (strain ATCC BAA-488 / DSM 13995 / JCM 10881 / RKU-1).